A 69-amino-acid polypeptide reads, in one-letter code: Amphipathic peptide StCT2 (69 aa).

Residues 1-23 (MKTQFAVLIISMILMQMLVQTEA) form the signal peptide. Residue Ile37 is modified to Isoleucine amide. Positions 41 to 69 (SLRNQDQFDNMFDSDLSDADLKLLDDLFD) are excised as a propeptide.

The protein belongs to the non-disulfide-bridged peptide (NDBP) superfamily. Short antimicrobial peptide (group 4) family. In terms of tissue distribution, expressed by the venom gland.

It is found in the secreted. Its subcellular location is the target cell membrane. In terms of biological role, antimicrobial peptide that is rapidly bactericidal against Gram-positive bacteria. The chain is Amphipathic peptide StCT2 from Scorpiops tibetanus (Scorpion).